The primary structure comprises 185 residues: Bcl-2-like protein 10 (185 aa).

A BH1 motif is present at residues 76-95 (LSNDQEFNWGRLVMLLAFVG). The short motif at 138 to 149 (WLEAHGGWDGFC) is the BH2 element. The chain crosses the membrane as a helical span at residues 160–182 (FWRRLLIRAILSCFFATAIFYIW).

This sequence belongs to the Bcl-2 family. In terms of assembly, interacts with BAX. Interacts with BCL2, BCL2L1/BCLX. Interacts with APAF1. Interacts with ITPR1, ITPR2 and ITPR3; the interaction with ITPR1 is increased in the presence of AHCLY1. Interacts with AHCYL1. Interacts with HIP1R (via ENTH and I/LWEQ domains). Interacts with CASP9. Interacts with BCL2L11/BIM. Interacts with BIK. Interacts with UBQLN4. Interacts with NME2/NM23-H2. Interacts with and PMAIP1/NOXA. Interacts with TPX2. Interacts with UBQLN1; in the cytoplasm. Interacts (via BH1 domain) with BECN1. Requires Ca(2+) as cofactor. In terms of processing, monoubiquitinated by UBQLN1; results in stabilization of BCL2L10 protein abundance and in relocalization from mitochondria to cytoplasm. In terms of tissue distribution, expressed in oligodendroglial lineage cells.

It localises to the mitochondrion. Its subcellular location is the nucleus membrane. The protein resides in the endoplasmic reticulum. The protein localises to the cytoplasm. It is found in the cytoskeleton. It localises to the spindle. Its function is as follows. Promotes cell survival by suppressing apoptosis induced by BAX but not BAK. Increases binding of AHCYL1/IRBIT to ITPR1. Reduces ITPR1-mediated calcium release from the endoplasmic reticulum cooperatively with AHCYL1/IRBIT under normal cellular conditions. Under apoptotic stress conditions, dissociates from ITPR1 and is displaced from mitochondria-associated endoplasmic reticulum membranes, leading to increased Ca(2+) transfer to mitochondria which promotes apoptosis. Required for the correct formation of the microtubule organizing center during oocyte cell division, potentially via regulation of protein abundance and localization of other microtubule organizing center components such as AURKA and TPX2. The chain is Bcl-2-like protein 10 from Rattus norvegicus (Rat).